A 525-amino-acid polypeptide reads, in one-letter code: GMP synthase [glutamine-hydrolyzing] (525 aa).

The region spanning 9-207 is the Glutamine amidotransferase type-1 domain; sequence RILILDFGSQ…VLDICQCEAL (199 aa). Cysteine 86 functions as the Nucleophile in the catalytic mechanism. Residues histidine 181 and glutamate 183 contribute to the active site. The GMPS ATP-PPase domain maps to 208–400; the sequence is WTPATIIEDA…LGLPYDMLFR (193 aa). Residue 235–241 participates in ATP binding; the sequence is SGGVDSS.

In terms of assembly, homodimer.

The catalysed reaction is XMP + L-glutamine + ATP + H2O = GMP + L-glutamate + AMP + diphosphate + 2 H(+). Its pathway is purine metabolism; GMP biosynthesis; GMP from XMP (L-Gln route): step 1/1. Catalyzes the synthesis of GMP from XMP. The chain is GMP synthase [glutamine-hydrolyzing] from Serratia proteamaculans (strain 568).